Consider the following 81-residue polypeptide: Photosystem I iron-sulfur center (81 aa).

2 4Fe-4S ferredoxin-type domains span residues 2-31 (SHTV…MVPW) and 39-68 (IASS…IRVY). [4Fe-4S] cluster-binding residues include cysteine 11, cysteine 14, cysteine 17, cysteine 21, cysteine 48, cysteine 51, cysteine 54, and cysteine 58.

As to quaternary structure, the cyanobacterial PSI reaction center is composed of one copy each of PsaA,B,C,D,E,F,I,J,K,L,M and X, and forms trimeric complexes. It depends on [4Fe-4S] cluster as a cofactor.

It localises to the cellular thylakoid membrane. It catalyses the reaction reduced [plastocyanin] + hnu + oxidized [2Fe-2S]-[ferredoxin] = oxidized [plastocyanin] + reduced [2Fe-2S]-[ferredoxin]. Functionally, apoprotein for the two 4Fe-4S centers FA and FB of photosystem I (PSI); essential for photochemical activity. FB is the terminal electron acceptor of PSI, donating electrons to ferredoxin. The C-terminus interacts with PsaA/B/D and helps assemble the protein into the PSI complex. Required for binding of PsaD and PsaE to PSI. PSI is a plastocyanin/cytochrome c6-ferredoxin oxidoreductase, converting photonic excitation into a charge separation, which transfers an electron from the donor P700 chlorophyll pair to the spectroscopically characterized acceptors A0, A1, FX, FA and FB in turn. The chain is Photosystem I iron-sulfur center from Microchaete diplosiphon (Fremyella diplosiphon).